Here is a 290-residue protein sequence, read N- to C-terminus: Phosphate import ATP-binding protein PstB (290 aa).

The 261-residue stretch at 25–285 folds into the ABC transporter domain; that stretch reads LEARNLDFYY…PKTRRARDYL (261 aa). Residue 57–64 participates in ATP binding; the sequence is GPSGCGKS.

The protein belongs to the ABC transporter superfamily. Phosphate importer (TC 3.A.1.7) family. As to quaternary structure, the complex is composed of two ATP-binding proteins (PstB), two transmembrane proteins (PstC and PstA) and a solute-binding protein (PstS).

The protein resides in the cell inner membrane. The enzyme catalyses phosphate(out) + ATP + H2O = ADP + 2 phosphate(in) + H(+). Part of the ABC transporter complex PstSACB involved in phosphate import. Responsible for energy coupling to the transport system. In Zymomonas mobilis subsp. mobilis (strain ATCC 31821 / ZM4 / CP4), this protein is Phosphate import ATP-binding protein PstB.